The primary structure comprises 364 residues: DNA replication and repair protein RecF (364 aa).

Position 23-30 (23-30 (GPNGIGKS)) interacts with ATP.

Belongs to the RecF family.

The protein localises to the cytoplasm. Its function is as follows. The RecF protein is involved in DNA metabolism; it is required for DNA replication and normal SOS inducibility. RecF binds preferentially to single-stranded, linear DNA. It also seems to bind ATP. The polypeptide is DNA replication and repair protein RecF (Synechococcus sp. (strain CC9605)).